The chain runs to 144 residues: Cell division protein SepF (144 aa).

The tract at residues 16 to 42 (DEMNEAPYTEAEQQEEEVPQAQKNERR) is disordered.

Belongs to the SepF family. As to quaternary structure, homodimer. Interacts with FtsZ.

It localises to the cytoplasm. In terms of biological role, cell division protein that is part of the divisome complex and is recruited early to the Z-ring. Probably stimulates Z-ring formation, perhaps through the cross-linking of FtsZ protofilaments. Its function overlaps with FtsA. This is Cell division protein SepF from Lactobacillus gasseri (strain ATCC 33323 / DSM 20243 / BCRC 14619 / CIP 102991 / JCM 1131 / KCTC 3163 / NCIMB 11718 / NCTC 13722 / AM63).